Consider the following 573-residue polypeptide: Glucocorticoid modulatory element-binding protein 1 (573 aa).

Alanine 2 is subject to N-acetylalanine. Positions 82–166 constitute an SAND domain; it reads TGTIEANEDM…RKMMDSGQID (85 aa). Zn(2+) is bound at residue cysteine 113. DNA is bound by residues lysine 139, lysine 143, lysine 146, and arginine 157. 3 residues coordinate Zn(2+): histidine 170, cysteine 174, and cysteine 178. Residues 321–367 adopt a coiled-coil conformation; the sequence is LDNRRNQVEQGEEQFLYTLTDLERQLEEQKKQGQDHRLKSQTVQNVV. The interval 370 to 398 is disordered; it reads PVSTPKPPKRPRLQRPASTTVLSPSPPVQ.

Homodimer, and heterodimer of GMEB1 and GMEB2. GMEB1 and GMEB2 form the parvovirus initiator complex (PIF). Interacts with the glucocorticoid receptor (NR3C1) and NCOA2/TIF2. May interact with HSP27 and CREB-binding protein (CBP).

Its subcellular location is the nucleus. It is found in the cytoplasm. In terms of biological role, trans-acting factor that binds to glucocorticoid modulatory elements (GME) present in the TAT (tyrosine aminotransferase) promoter and increases sensitivity to low concentrations of glucocorticoids. Also binds to the transferrin receptor promoter. Essential auxiliary factor for the replication of parvoviruses. This is Glucocorticoid modulatory element-binding protein 1 (GMEB1) from Homo sapiens (Human).